The chain runs to 427 residues: MTVSFEKTSDTKGTLSFSIDQETIKTGLDKAFNKVKANISVPGFRKGKISRQMFNKMYGEEALFEEALNAVLPTAYDAAVKEAAIEPVAQPKIDVAKMEKGSDWELTAEVVVKPTITLGDYKDLTVEVDATKEVTDEEVETRLTNAQNNLAELAVKETAAENGDTVVIDFVGSVDGVEFEGGKGSNHSLELGSGQFIPGFEEQLIGTKAGETVEVKVTFPENYQAEDLAGKEALFVTTVNEVKAKELPELDDELAKDIDEEVETLEELKAKFRKELEESKSEAYDDAVETAAIEAAVANAEIKEIPEEMIHEEVHRAMNEFLGGMQQQGISPEMYFQITGTSEDDLHKQYEADADKRVRTNLVIEAIAAAESFTTSDEEVKAEIEDLAGQYNMPVEQVEKLLPVDMLKHDIAMKKAVEVIATTAKVK.

The 86-residue stretch at glycine 163–proline 248 folds into the PPIase FKBP-type domain.

This sequence belongs to the FKBP-type PPIase family. Tig subfamily.

It localises to the cytoplasm. It catalyses the reaction [protein]-peptidylproline (omega=180) = [protein]-peptidylproline (omega=0). Functionally, involved in protein export. Acts as a chaperone by maintaining the newly synthesized protein in an open conformation. Functions as a peptidyl-prolyl cis-trans isomerase. This is Trigger factor from Lactococcus lactis subsp. cremoris (strain MG1363).